Here is a 419-residue protein sequence, read N- to C-terminus: S-adenosylmethionine synthase (419 aa).

Position 14 (His-14) interacts with ATP. Asp-16 contributes to the Mg(2+) binding site. Glu-42 lines the K(+) pocket. Residues Glu-55 and Gln-98 each coordinate L-methionine. The segment at 98–108 (QSADINQGVDR) is flexible loop. Residues 164 to 166 (DAK), 242 to 243 (KF), Asp-251, 257 to 258 (RK), Ala-274, and Lys-278 each bind ATP. Asp-251 contacts L-methionine. Lys-282 lines the L-methionine pocket.

Belongs to the AdoMet synthase family. In terms of assembly, homotetramer; dimer of dimers. The cofactor is Mg(2+). K(+) serves as cofactor.

It is found in the cytoplasm. It catalyses the reaction L-methionine + ATP + H2O = S-adenosyl-L-methionine + phosphate + diphosphate. Its pathway is amino-acid biosynthesis; S-adenosyl-L-methionine biosynthesis; S-adenosyl-L-methionine from L-methionine: step 1/1. Its function is as follows. Catalyzes the formation of S-adenosylmethionine (AdoMet) from methionine and ATP. The overall synthetic reaction is composed of two sequential steps, AdoMet formation and the subsequent tripolyphosphate hydrolysis which occurs prior to release of AdoMet from the enzyme. The protein is S-adenosylmethionine synthase of Cytophaga hutchinsonii (strain ATCC 33406 / DSM 1761 / CIP 103989 / NBRC 15051 / NCIMB 9469 / D465).